We begin with the raw amino-acid sequence, 3123 residues long: Protein bark beetle (3123 aa).

Positions 1–34 are cleaved as a signal peptide; sequence MKLQHHKTNRQRISKPHRDPKWASICLWLLVTLA. The Extracellular portion of the chain corresponds to 35–2714; it reads FSTHLARSQE…IIDPLSWRAD (2680 aa). Positions 83–104 are disordered; it reads DVTVAPQGSTPSMTSSSSYTEL. Residues 91–102 show a composition bias toward low complexity; sequence STPSMTSSSSYT. The region spanning 191 to 295 is the SRCR 1 domain; the sequence is IRLVDGPTPV…YHNDLGIQCL (105 aa). Cystine bridges form between cysteine 216-cysteine 284, cysteine 231-cysteine 294, and cysteine 262-cysteine 272. Asparagine 221 carries N-linked (GlcNAc...) asparagine glycosylation. 3 PbH1 repeats span residues 358–380, 382–404, and 406–428; these read GLPP…NSTR, WAGF…FVNS, and QGAV…KYVG. N-linked (GlcNAc...) asparagine glycosylation is found at asparagine 377, asparagine 389, and asparagine 403. An intrachain disulfide couples cysteine 446 to cysteine 474. The CUB domain maps to 446–559; sequence CTLPTTSGQT…NGFFRMTSGD (114 aa). 2 N-linked (GlcNAc...) asparagine glycosylation sites follow: asparagine 498 and asparagine 523. PbH1 repeat units lie at residues 562–584, 586–609, and 611–633; these read AYDL…AIDN, RSKL…HVTS, and AGDV…NITY. 8 N-linked (GlcNAc...) asparagine glycosylation sites follow: asparagine 615, asparagine 620, asparagine 630, asparagine 639, asparagine 658, asparagine 672, asparagine 702, and asparagine 709. PbH1 repeat units lie at residues 756–778 and 789–809; these read NLQG…FINN and PVKL…HVVS. N-linked (GlcNAc...) asparagine glycosylation is found at asparagine 834, asparagine 900, and asparagine 1040. One can recognise an SRCR 2 domain in the interval 1071–1175; sequence VRLVGGAGAN…HENDVGLRCY (105 aa). Disulfide bonds link cysteine 1096–cysteine 1164, cysteine 1109–cysteine 1174, and cysteine 1144–cysteine 1154. PbH1 repeat units lie at residues 1219–1241 and 1248–1270; these read HARH…GIIY and KSVN…SLKQ. The N-linked (GlcNAc...) asparagine glycan is linked to asparagine 1375. PbH1 repeat units lie at residues 1451–1475 and 1489–1511; these read VPTL…YYNR and NESI…LIRS. N-linked (GlcNAc...) asparagine glycosylation is found at asparagine 1489, asparagine 1520, and asparagine 1529. One copy of the PbH1 13 repeat lies at 1553-1575; it reads LFHYVIQDTTFEQNTHGGFQVSL. N-linked (GlcNAc...) asparagine glycosylation is found at asparagine 1584, asparagine 1593, and asparagine 1614. One copy of the PbH1 14 repeat lies at 1722-1744; that stretch reads LYRNLIAENEMDYNLVAGVRSAR. N-linked (GlcNAc...) asparagine glycosylation is found at asparagine 1883, asparagine 1920, and asparagine 1940. In terms of domain architecture, SRCR 3 spans 1912 to 2037; it reads IRLCTSANNC…DDVFVFVSCN (126 aa). Cystine bridges form between cysteine 1950-cysteine 2025, cysteine 1963-cysteine 2036, and cysteine 2000-cysteine 2010. 2 PbH1 repeats span residues 2104–2126 and 2128–2150; these read HKNP…NMIA and SGKL…SIVS. Residues asparagine 2139, asparagine 2231, asparagine 2251, asparagine 2314, and asparagine 2357 are each glycosylated (N-linked (GlcNAc...) asparagine). 3 PbH1 repeats span residues 2337 to 2361, 2372 to 2393, and 2401 to 2424; these read TPTL…FSTC, MNSL…RIRA, and SLRG…YVEG. Asparagine 2459, asparagine 2536, asparagine 2546, asparagine 2566, asparagine 2596, and asparagine 2636 each carry an N-linked (GlcNAc...) asparagine glycan. A helical membrane pass occupies residues 2715 to 2735; sequence IFAISIISAFVLAIILLILVA. Residues 2736–3123 lie on the Cytoplasmic side of the membrane; that stretch reads FCWFAKSKHR…SHSQPLETAM (388 aa). Disordered regions lie at residues 2766–2789, 2961–2983, 2996–3015, and 3025–3123; these read IDPQ…LSKG, YQRS…PFDQ, LYRP…ADMR, and RSSK…ETAM. The span at 2778–2788 shows a compositional bias: polar residues; the sequence is YNMSSNGTLSK. Low complexity predominate over residues 2964–2973; the sequence is SSHSSFMPHR. Composition is skewed to low complexity over residues 3047-3057 and 3068-3078; these read PNVAPAGGPAQ and SEESSPTTPSP. Polar residues predominate over residues 3107–3123; it reads PLQTNGRSHSQPLETAM.

N-glycosylated. Post-translationally, may be proteolytically cleaved in the extracellular domain. Expression detected in embryonic epithelia and central nervous system (at protein level). First detected during stage 13 in the tracheal system, the foregut, the hindgut, the salivary glands and the epidermis. Expression persists in these tissues until the end of embryogenesis. Expression in epithelia declines from late stage 15 and expression appears in the central nervous system during stage 16.

The protein localises to the cell membrane. Its subcellular location is the cell junction. It localises to the septate junction. The protein resides in the adherens junction. Required for the maturation but not the establishment of septate junctions in developing epithelial cells and is involved in epithelial cell adhesion during septate junction maturation. Plays a role in the proper localization of the septate junction core components pck/mega, kune, Nrx-IV and Nrg during late embryogenesis. Involved in the formation of tricellular junctions which mediate cell contact where three epithelial cells meet but not of bicellular junctions. Required for the accumulation of Gli at tricellular junctions. This chain is Protein bark beetle, found in Drosophila melanogaster (Fruit fly).